Consider the following 734-residue polypeptide: Photosystem I P700 chlorophyll a apoprotein A2 (734 aa).

Transmembrane regions (helical) follow at residues 46–69, 135–158, 175–199, 273–291, 330–353, 369–395, 417–439, and 517–535; these read IFAS…FHVA, LYNG…LHLQ, LNHH…HVAI, IAHH…GHMY, IHFQ…QHMY, AALY…IFFI, AIIS…LYVH, and FLVH…LILV. [4Fe-4S] cluster contacts are provided by cysteine 559 and cysteine 568. Helical transmembrane passes span 575-596 and 643-665; these read AFYL…YWHW and LSVW…MFLI. 3 residues coordinate chlorophyll a: histidine 654, methionine 662, and tyrosine 670. Tryptophan 671 is a phylloquinone binding site. A helical transmembrane segment spans residues 707 to 727; it reads LVGLAHFSVGYIFTYAAFLIA.

The protein belongs to the PsaA/PsaB family. The PsaA/B heterodimer binds the P700 chlorophyll special pair and subsequent electron acceptors. PSI consists of a core antenna complex that captures photons, and an electron transfer chain that converts photonic excitation into a charge separation. The eukaryotic PSI reaction center is composed of at least 11 subunits. P700 is a chlorophyll a/chlorophyll a' dimer, A0 is one or more chlorophyll a, A1 is one or both phylloquinones and FX is a shared 4Fe-4S iron-sulfur center. is required as a cofactor.

Its subcellular location is the plastid. The protein resides in the chloroplast thylakoid membrane. The catalysed reaction is reduced [plastocyanin] + hnu + oxidized [2Fe-2S]-[ferredoxin] = oxidized [plastocyanin] + reduced [2Fe-2S]-[ferredoxin]. PsaA and PsaB bind P700, the primary electron donor of photosystem I (PSI), as well as the electron acceptors A0, A1 and FX. PSI is a plastocyanin-ferredoxin oxidoreductase, converting photonic excitation into a charge separation, which transfers an electron from the donor P700 chlorophyll pair to the spectroscopically characterized acceptors A0, A1, FX, FA and FB in turn. Oxidized P700 is reduced on the lumenal side of the thylakoid membrane by plastocyanin. The chain is Photosystem I P700 chlorophyll a apoprotein A2 from Morus indica (Mulberry).